The chain runs to 880 residues: Probable potassium channel AKT5 (880 aa).

The Cytoplasmic segment spans residues 1–82; the sequence is MGIEKRKKMV…PFDPRYRAWD (82 aa). A helical membrane pass occupies residues 83-103; the sequence is WFLVILVLYTAWASPFEFGFL. The Extracellular segment spans residues 104–111; sequence QTPRAPLS. Residues 112–132 form a helical membrane-spanning segment; it reads ILDNVVNGFFAVDIVLTFFVA. The Cytoplasmic segment spans residues 133–153; it reads FLDKATYLLVDDPKRIAWRYT. A helical membrane pass occupies residues 154–174; it reads STWLIFDVVSTVPYELFGSLL. Over 175–182 the chain is Extracellular; the sequence is HNTIQGYG. Residues 183–203 form a helical; Voltage-sensor membrane-spanning segment; that stretch reads IFSMLRLWRLHRVSKCFARLE. The Cytoplasmic portion of the chain corresponds to 204–217; sequence KDRKYNYFWIRCTK. The chain crosses the membrane as a helical span at residues 218–238; that stretch reads LLLVSLFVVHCGACFCYSIAA. The Extracellular portion of the chain corresponds to 239–265; it reads HYPDPSMTFMALAEANWKQKSLLIRYV. An intramembrane region (pore-forming) is located at residues 266-285; it reads TAMYWSITTFSTTGYGDIHG. Over 286 to 291 the chain is Extracellular; that stretch reads NNAEER. The helical transmembrane segment at 292 to 312 threads the bilayer; sequence AFILFYMIFNLGLLAYIIGNM. Over 313–880 the chain is Cytoplasmic; sequence TNLVVHVTSR…GDFLLLLKVS (568 aa). 396–517 serves as a coordination point for a nucleoside 3',5'-cyclic phosphate; sequence LFHGISNDLL…IMNNLLQHLK (122 aa). ANK repeat units lie at residues 541–570, 574–603, 607–636, 637–667, and 671–700; these read DLPL…NPNE, NGRT…DPNI, EGSV…TLSF, DTVG…DISL, and NGTT…DMDK. Positions 809–880 constitute a KHA domain; sequence VGGVYPARVT…GDFLLLLKVS (72 aa).

It belongs to the potassium channel family. Plant (TC 1.A.1.4) subfamily. As to quaternary structure, the potassium channel is probably composed of a homo- or heterotetrameric complex of pore-forming subunits. In terms of tissue distribution, predominantly expressed in flowers.

It is found in the membrane. Its function is as follows. Probable potassium channel. May interact with the cytoskeleton or with regulatory proteins. The protein is Probable potassium channel AKT5 (AKT5) of Arabidopsis thaliana (Mouse-ear cress).